We begin with the raw amino-acid sequence, 453 residues long: MERTCLAVILAAGDSTRMKSSKSKVLHPVAGRPMIAHVVEAVASAGISSVALVVGRDAGEVAKAASIDGVGIEAYLQQQRLGTGHAVLAAREAIAKGYDDILVTYGDVPLQTNGPLKAARQGLAEGSDVVVIGFHTDRPTGYGRLLVKDGELIAIREEKDASDAERAVTWCNSGLMAINGRKALDLLSRIGNANAKGEFYLTDLVEIARSLGGRVTAVDAPEIEMTGCNNRAELAVIERFWQERRRREMMLAGVTMIAPETVFLSYDTVIGQDALIEPNVVFGPGAVIDSGAVIHAFSHIEGAHVSEGATVGPFARLRPGADLAMGSKVGNFCEVKNGRIGVGAKVNHLTYIGDAVVGAGSNIGAGTITCNYDGVNKSETVIGENAFIGSNSSLVAPVTIGDGAYIASGSVITVDVPADALALGRARQEIKPGRATLLRQRALAIKAAKKAEA.

A pyrophosphorylase region spans residues 1–231 (MERTCLAVIL…EIEMTGCNNR (231 aa)). UDP-N-acetyl-alpha-D-glucosamine-binding positions include 10 to 13 (LAAG), Lys-24, Gln-77, 82 to 83 (GT), 105 to 107 (YGD), Gly-143, Glu-157, Asn-172, and Asn-229. Asp-107 serves as a coordination point for Mg(2+). Asn-229 lines the Mg(2+) pocket. Positions 232–252 (AELAVIERFWQERRRREMMLA) are linker. Residues 253-453 (GVTMIAPETV…AIKAAKKAEA (201 aa)) form an N-acetyltransferase region. The UDP-N-acetyl-alpha-D-glucosamine site is built by Arg-318 and Lys-336. Residue His-348 is the Proton acceptor of the active site. Positions 351 and 362 each coordinate UDP-N-acetyl-alpha-D-glucosamine. Acetyl-CoA is bound by residues Ala-365, 371-372 (NY), Ser-390, Ser-408, and Arg-425.

This sequence in the N-terminal section; belongs to the N-acetylglucosamine-1-phosphate uridyltransferase family. It in the C-terminal section; belongs to the transferase hexapeptide repeat family. In terms of assembly, homotrimer. It depends on Mg(2+) as a cofactor.

It is found in the cytoplasm. It catalyses the reaction alpha-D-glucosamine 1-phosphate + acetyl-CoA = N-acetyl-alpha-D-glucosamine 1-phosphate + CoA + H(+). The enzyme catalyses N-acetyl-alpha-D-glucosamine 1-phosphate + UTP + H(+) = UDP-N-acetyl-alpha-D-glucosamine + diphosphate. Its pathway is nucleotide-sugar biosynthesis; UDP-N-acetyl-alpha-D-glucosamine biosynthesis; N-acetyl-alpha-D-glucosamine 1-phosphate from alpha-D-glucosamine 6-phosphate (route II): step 2/2. The protein operates within nucleotide-sugar biosynthesis; UDP-N-acetyl-alpha-D-glucosamine biosynthesis; UDP-N-acetyl-alpha-D-glucosamine from N-acetyl-alpha-D-glucosamine 1-phosphate: step 1/1. It participates in bacterial outer membrane biogenesis; LPS lipid A biosynthesis. In terms of biological role, catalyzes the last two sequential reactions in the de novo biosynthetic pathway for UDP-N-acetylglucosamine (UDP-GlcNAc). The C-terminal domain catalyzes the transfer of acetyl group from acetyl coenzyme A to glucosamine-1-phosphate (GlcN-1-P) to produce N-acetylglucosamine-1-phosphate (GlcNAc-1-P), which is converted into UDP-GlcNAc by the transfer of uridine 5-monophosphate (from uridine 5-triphosphate), a reaction catalyzed by the N-terminal domain. The polypeptide is Bifunctional protein GlmU (Rhizobium etli (strain ATCC 51251 / DSM 11541 / JCM 21823 / NBRC 15573 / CFN 42)).